Consider the following 128-residue polypeptide: KHDC1-like protein (128 aa).

The protein belongs to the KHDC1 family.

This chain is KHDC1-like protein (KHDC1L), found in Homo sapiens (Human).